Consider the following 115-residue polypeptide: Large ribosomal subunit protein bL20c (115 aa).

This sequence belongs to the bacterial ribosomal protein bL20 family.

It localises to the plastid. It is found in the chloroplast. Functionally, binds directly to 23S ribosomal RNA and is necessary for the in vitro assembly process of the 50S ribosomal subunit. It is not involved in the protein synthesizing functions of that subunit. This chain is Large ribosomal subunit protein bL20c, found in Pleurastrum terricola (Filamentous green alga).